The chain runs to 651 residues: Acetyl-coenzyme A synthetase (651 aa).

CoA contacts are provided by residues 189–192 (RGGK), Thr311, and Asn335. Residues 387–389 (GEP), 411–416 (DTWWQT), Asp500, and Arg515 each bind ATP. Ser523 contacts CoA. Residue Arg526 coordinates ATP. Residues Val537, His539, and Val542 each contribute to the Mg(2+) site. Residue Arg584 coordinates CoA. N6-acetyllysine is present on Lys609.

Belongs to the ATP-dependent AMP-binding enzyme family. Requires Mg(2+) as cofactor. Post-translationally, acetylated. Deacetylation by the SIR2-homolog deacetylase activates the enzyme.

It carries out the reaction acetate + ATP + CoA = acetyl-CoA + AMP + diphosphate. In terms of biological role, catalyzes the conversion of acetate into acetyl-CoA (AcCoA), an essential intermediate at the junction of anabolic and catabolic pathways. AcsA undergoes a two-step reaction. In the first half reaction, AcsA combines acetate with ATP to form acetyl-adenylate (AcAMP) intermediate. In the second half reaction, it can then transfer the acetyl group from AcAMP to the sulfhydryl group of CoA, forming the product AcCoA. The chain is Acetyl-coenzyme A synthetase from Allorhizobium ampelinum (strain ATCC BAA-846 / DSM 112012 / S4) (Agrobacterium vitis (strain S4)).